We begin with the raw amino-acid sequence, 44 residues long: Protein PsbN (44 aa).

Residues 7-29 form a helical membrane-spanning segment; that stretch reads FFTTFLGCLLLSITGYSIYVGFG.

Belongs to the PsbN family.

The protein resides in the plastid. The protein localises to the chloroplast thylakoid membrane. In terms of biological role, may play a role in photosystem I and II biogenesis. The polypeptide is Protein PsbN (Pleurastrum terricola (Filamentous green alga)).